The sequence spans 213 residues: Gas vesicle protein F1 (213 aa).

The protein belongs to the gas vesicle GvpF/GvpL family. In terms of assembly, binds GvpA1 in early growth stages; is the only one of GvpF1 to GvpM1 that interacts with GvpA1 in H.volcanii experiments. GvpF to GvpM interact with each other in vitro, and may form multi-subunit complex(es). Interacts with GvpC1 and GvpO1.

It is found in the gas vesicle. The protein resides in the cytoplasm. Its function is as follows. Might be involved in preventing aggregation of GvpA1. Proteins GvpF to GvpM might be involved in nucleating gas vesicle formation. A minor component of the gas vesicle, also found in soluble extracts. Gas vesicles are hollow, gas filled proteinaceous nanostructures found in several microbial planktonic microorganisms. They allow positioning of halobacteria at the optimal depth for growth in the poorly aerated, shallow brine pools of their habitat. Functionally, expression of a 9.5 kb p-vac DNA fragment containing 2 divergently transcribed regions (gvpD-gvpE-gvpF-gvpG-gvpH-gvpI-gvpJ-gvpK-gvpL-gvpM and gvpA-gvpC-gvpN-gvpO) allows H.volcanii to produce gas vesicles. A minimal gas vesicle can be made in H.volcanii by gvpA1-gvpO1 plus gvpF1-gvpG1-gvpJ1-gvpK1-gvpL1-gvpM1; lack of enough GvpJ1 prevents formation. The same region restores gas vesicle production in H.halobium without the p-vac locus. This Halobacterium salinarum (strain ATCC 700922 / JCM 11081 / NRC-1) (Halobacterium halobium) protein is Gas vesicle protein F1 (gvpF11).